The chain runs to 434 residues: Guanosine-inosine kinase (434 aa).

Residues 40–45, 93–97, and Arg198 each bind GMP; these read DQTLVD and GTIGN. ATP is bound by residues 284 to 289, Gly357, and Asn402; that span reads TAGPIG.

It belongs to the carbohydrate kinase PfkB family. Requires Mg(2+) as cofactor.

The catalysed reaction is guanosine + ATP = GMP + ADP + H(+). It catalyses the reaction inosine + ATP = IMP + ADP + H(+). The protein operates within purine metabolism; IMP biosynthesis via salvage pathway; IMP from inosine: step 1/1. Its pathway is purine metabolism; GMP biosynthesis via salvage pathway. In terms of biological role, catalyzes the phosphorylation of guanosine and inosine to GMP and IMP, respectively. The sequence is that of Guanosine-inosine kinase from Escherichia coli O157:H7.